The sequence spans 1229 residues: Membrane-anchored lipid-binding protein SIP3 (1229 aa).

The Cytoplasmic segment spans residues 1–1066; the sequence is MSVHGRDPKK…AEKFSRINRM (1066 aa). Residues 309–423 enclose the PH domain; sequence SPEKSGWLYM…WLIAFEATKK (115 aa). The VASt domain occupies 771 to 976; sequence EYSITYNHEY…VLRYYLEKIG (206 aa). The helical transmembrane segment at 1067 to 1087 threads the bilayer; that stretch reads MVVGLLASIMINILLSEKASV. The Lumenal segment spans residues 1088–1229; it reads PYWSIKRAEK…ELEKLRPPIT (142 aa). Residue Asn-1206 is glycosylated (N-linked (GlcNAc...) asparagine).

Belongs to the SIP3 family. In terms of assembly, interacts with SNF1.

Its subcellular location is the endoplasmic reticulum membrane. In terms of biological role, may be involved in sterol transfer between intracellular membranes. The sequence is that of Membrane-anchored lipid-binding protein SIP3 from Saccharomyces cerevisiae (strain ATCC 204508 / S288c) (Baker's yeast).